Consider the following 342-residue polypeptide: Holliday junction branch migration complex subunit RuvB (342 aa).

The interval 1–179 (MTNILSPEKS…FGIPMRLNFY (179 aa)) is large ATPase domain (RuvB-L). ATP is bound by residues I18, R19, G60, K63, T64, T65, 126–128 (EDF), R169, Y179, and R216. Residue T64 participates in Mg(2+) binding. A small ATPAse domain (RuvB-S) region spans residues 180–250 (NTEELKQVLN…ICDFGLKRLT (71 aa)). Residues 253–342 (SIGLDSNDYR…HQFNILNENE (90 aa)) form a head domain (RuvB-H) region. Residues R289, R308, and R313 each coordinate DNA.

Belongs to the RuvB family. In terms of assembly, homohexamer. Forms an RuvA(8)-RuvB(12)-Holliday junction (HJ) complex. HJ DNA is sandwiched between 2 RuvA tetramers; dsDNA enters through RuvA and exits via RuvB. An RuvB hexamer assembles on each DNA strand where it exits the tetramer. Each RuvB hexamer is contacted by two RuvA subunits (via domain III) on 2 adjacent RuvB subunits; this complex drives branch migration. In the full resolvosome a probable DNA-RuvA(4)-RuvB(12)-RuvC(2) complex forms which resolves the HJ.

It is found in the cytoplasm. It carries out the reaction ATP + H2O = ADP + phosphate + H(+). The RuvA-RuvB-RuvC complex processes Holliday junction (HJ) DNA during genetic recombination and DNA repair, while the RuvA-RuvB complex plays an important role in the rescue of blocked DNA replication forks via replication fork reversal (RFR). RuvA specifically binds to HJ cruciform DNA, conferring on it an open structure. The RuvB hexamer acts as an ATP-dependent pump, pulling dsDNA into and through the RuvAB complex. RuvB forms 2 homohexamers on either side of HJ DNA bound by 1 or 2 RuvA tetramers; 4 subunits per hexamer contact DNA at a time. Coordinated motions by a converter formed by DNA-disengaged RuvB subunits stimulates ATP hydrolysis and nucleotide exchange. Immobilization of the converter enables RuvB to convert the ATP-contained energy into a lever motion, pulling 2 nucleotides of DNA out of the RuvA tetramer per ATP hydrolyzed, thus driving DNA branch migration. The RuvB motors rotate together with the DNA substrate, which together with the progressing nucleotide cycle form the mechanistic basis for DNA recombination by continuous HJ branch migration. Branch migration allows RuvC to scan DNA until it finds its consensus sequence, where it cleaves and resolves cruciform DNA. In Rickettsia typhi (strain ATCC VR-144 / Wilmington), this protein is Holliday junction branch migration complex subunit RuvB.